The sequence spans 507 residues: Cyclin-dependent kinase-like 2 (507 aa).

The Protein kinase domain maps to 4–289 (YENLGLVGEG…CADLLHHDFF (286 aa)). ATP contacts are provided by residues 10–18 (VGEGSYGMV) and lysine 33. Residues 45 to 51 (KKIAMRE) carry the [NKR]KIAxRE motif. Catalysis depends on aspartate 126, which acts as the Proton acceptor. Residues 365-392 (KTEKGTRASNGSCLHDNGTSHKGLSSTS) are disordered.

This sequence belongs to the protein kinase superfamily. CMGC Ser/Thr protein kinase family. CDC2/CDKX subfamily.

It is found in the cytoplasm. Its subcellular location is the nucleus. The catalysed reaction is L-seryl-[protein] + ATP = O-phospho-L-seryl-[protein] + ADP + H(+). It catalyses the reaction L-threonyl-[protein] + ATP = O-phospho-L-threonyl-[protein] + ADP + H(+). This is Cyclin-dependent kinase-like 2 from Rattus norvegicus (Rat).